Here is a 156-residue protein sequence, read N- to C-terminus: ATP synthase subunit b (156 aa).

A helical transmembrane segment spans residues 12–32 (IAFAIFVLFCMKFIWPALMGA).

Belongs to the ATPase B chain family. In terms of assembly, F-type ATPases have 2 components, F(1) - the catalytic core - and F(0) - the membrane proton channel. F(1) has five subunits: alpha(3), beta(3), gamma(1), delta(1), epsilon(1). F(0) has three main subunits: a(1), b(2) and c(10-14). The alpha and beta chains form an alternating ring which encloses part of the gamma chain. F(1) is attached to F(0) by a central stalk formed by the gamma and epsilon chains, while a peripheral stalk is formed by the delta and b chains.

The protein resides in the cell inner membrane. Functionally, f(1)F(0) ATP synthase produces ATP from ADP in the presence of a proton or sodium gradient. F-type ATPases consist of two structural domains, F(1) containing the extramembraneous catalytic core and F(0) containing the membrane proton channel, linked together by a central stalk and a peripheral stalk. During catalysis, ATP synthesis in the catalytic domain of F(1) is coupled via a rotary mechanism of the central stalk subunits to proton translocation. Its function is as follows. Component of the F(0) channel, it forms part of the peripheral stalk, linking F(1) to F(0). The polypeptide is ATP synthase subunit b (Psychrobacter sp. (strain PRwf-1)).